The chain runs to 450 residues: Regulator of sigma-E protease RseP (450 aa).

The helical transmembrane segment at 1 to 21 (MLSILWNLAAFIIALGVLITV) threads the bilayer. A Zn(2+)-binding site is contributed by His22. Topologically, residues 22 to 103 (HEFGHFWVAR…VGQRAAIIAA (82 aa)) are periplasmic. Residue Glu23 is part of the active site. His26 is a binding site for Zn(2+). Residues 104–124 (GPVANFIFAIFAYWLVFIIGV) traverse the membrane as a helical segment. PDZ domains are found at residues 115 to 186 (AYWL…APFG) and 199 to 291 (HWAF…TPDT). Residues 125 to 375 (PGVRPVIGEI…QGAGMSAEFG (251 aa)) lie on the Cytoplasmic side of the membrane. A helical transmembrane segment spans residues 376 to 396 (VIYYLMFLALISVNLGIINLF). The Periplasmic segment spans residues 397-429 (PLPVLDGGHLLFLAIEKLKGGPVSERVQDFSYR). A helical membrane pass occupies residues 430-450 (IGSILLVLLMGLALFNDFSRL).

It belongs to the peptidase M50B family. It depends on Zn(2+) as a cofactor.

It localises to the cell inner membrane. A site-2 regulated intramembrane protease that cleaves the peptide bond between 'Ala-108' and 'Cys-109' in the transmembrane region of RseA. Part of a regulated intramembrane proteolysis (RIP) cascade. Acts on DegS-cleaved RseA to release the cytoplasmic domain of RseA. This provides the cell with sigma-E (RpoE) activity through the proteolysis of RseA. The polypeptide is Regulator of sigma-E protease RseP (rsep) (Salmonella typhimurium (strain 14028s / SGSC 2262)).